Reading from the N-terminus, the 339-residue chain is Neutrophil cytosol factor 4 (339 aa).

Positions 19-140 (DVAVSANIAD…IFFYQSAYDA (122 aa)) constitute a PX domain. Residues 58-60 (RYR) and 92-94 (KVY) contribute to the a 1,2-diacyl-sn-glycero-3-phospho-(1D-myo-inositol-3-phosphate) site. Position 154 is a phosphothreonine (Thr154). The SH3 domain occupies 170 to 229 (MEAPRAEALFDFTGNSKLELSFKAGDVIFLLSKINKDWLEGTSQGATGIFPGSFVKILKD). One can recognise a PB1 domain in the interval 237-329 (TNWLRCYFYE…FPWKLHVTQK (93 aa)). At Ser315 the chain carries Phosphoserine.

In terms of assembly, component of the phagocyte NADPH oxidase complex composed of an obligatory core heterodimer formed by the membrane proteins CYBA and CYBB and the cytosolic regulatory subunits NCF1/p47-phox, NCF2/p67-phox, NCF4/p40-phox and the small GTPase RAC1 or RAC2. Part of a cytosolic complex composed at least by NCF1, NCF2 and NCF4. Interacts with NCF2. Interacts with NCF1. The NCF2-NCF4 complex interacts with GBP7 (via GB1/RHD3-type G domain).

Its subcellular location is the cytoplasm. It localises to the cytosol. It is found in the endosome membrane. The protein resides in the membrane. Its function is as follows. Subunit of the phagocyte NADPH oxidase complex that mediates the transfer of electrons from cytosolic NADPH to O2 to produce the superoxide anion (O2(-)). In the activated complex, electrons are first transferred from NADPH to flavin adenine dinucleotide (FAD) and subsequently transferred via two heme molecules to molecular oxygen, producing superoxide through an outer-sphere reaction. Activation of the NADPH oxidase complex is initiated by the assembly of cytosolic subunits of the NADPH oxidase complex with the core NADPH oxidase complex to form a complex at the plasma membrane or phagosomal membrane. This activation process is initiated by phosphorylation dependent binding of the cytosolic NCF1/p47-phox subunit to the C-terminus of CYBA/p22-phox. This is Neutrophil cytosol factor 4 from Mus musculus (Mouse).